The following is a 470-amino-acid chain: Ribulose bisphosphate carboxylase large chain (470 aa).

Positions 118 and 168 each coordinate substrate. Residue Lys-170 is the Proton acceptor of the active site. Substrate is bound at residue Lys-172. Lys-196, Asp-198, and Glu-199 together coordinate Mg(2+). Lys-196 carries the post-translational modification N6-carboxylysine. His-289 (proton acceptor) is an active-site residue. The substrate site is built by Arg-290, His-322, and Ser-374.

The protein belongs to the RuBisCO large chain family. Type I subfamily. As to quaternary structure, heterohexadecamer of 8 large chains and 8 small chains; disulfide-linked. The disulfide link is formed within the large subunit homodimers. RuBisCO interacts with the C-terminus of CcmM, and can be found in complexes that also include carbonic anhydrase (ccaA). RuBisCO associates with both the internal and shell portion of carboxysomes. The cofactor is Mg(2+). In terms of processing, the disulfide bond which can form in the large chain dimeric partners within the hexadecamer appears to be associated with oxidative stress and protein turnover.

It localises to the carboxysome. It carries out the reaction 2 (2R)-3-phosphoglycerate + 2 H(+) = D-ribulose 1,5-bisphosphate + CO2 + H2O. The catalysed reaction is D-ribulose 1,5-bisphosphate + O2 = 2-phosphoglycolate + (2R)-3-phosphoglycerate + 2 H(+). RuBisCO catalyzes two reactions: the carboxylation of D-ribulose 1,5-bisphosphate, the primary event in carbon dioxide fixation, as well as the oxidative fragmentation of the pentose substrate in the photorespiration process. Both reactions occur simultaneously and in competition at the same active site. This Synechocystis sp. (strain ATCC 27184 / PCC 6803 / Kazusa) protein is Ribulose bisphosphate carboxylase large chain.